A 305-amino-acid polypeptide reads, in one-letter code: Methionyl-tRNA formyltransferase (305 aa).

111–114 (SLLP) is a binding site for (6S)-5,6,7,8-tetrahydrofolate.

The protein belongs to the Fmt family.

The catalysed reaction is L-methionyl-tRNA(fMet) + (6R)-10-formyltetrahydrofolate = N-formyl-L-methionyl-tRNA(fMet) + (6S)-5,6,7,8-tetrahydrofolate + H(+). Its function is as follows. Attaches a formyl group to the free amino group of methionyl-tRNA(fMet). The formyl group appears to play a dual role in the initiator identity of N-formylmethionyl-tRNA by promoting its recognition by IF2 and preventing the misappropriation of this tRNA by the elongation apparatus. The polypeptide is Methionyl-tRNA formyltransferase (Campylobacter jejuni (strain RM1221)).